We begin with the raw amino-acid sequence, 464 residues long: Sensor histidine kinase Hik34 (464 aa).

The Histidine kinase domain occupies 235 to 449; sequence ALTHEVRTPL…ILTIYLKCEQ (215 aa). His-238 carries the post-translational modification Phosphohistidine; by autocatalysis.

Post-translationally, when expressed in E.coli autophosphorylates at 18 to 30 degrees Celsius; less phosphorylation occurs at 36 and none occurs at 42 or 48 degrees Celsius.

It catalyses the reaction ATP + protein L-histidine = ADP + protein N-phospho-L-histidine.. Member of a two-component system Hik34/Rre1, controlling expression of at least 20 genes in response to hyperosmotic stress (0.5 M sorbitol) or salt (0.5 M NaCl). Represses expression of heat shock genes under normal growth conditions. Required for survival of long-term heat shock exposure. The polypeptide is Sensor histidine kinase Hik34 (Synechocystis sp. (strain ATCC 27184 / PCC 6803 / Kazusa)).